The sequence spans 215 residues: uncharacterized protein (215 aa).

6 consecutive transmembrane segments (helical) span residues Leu-3–Ile-23, Ala-30–Trp-50, Leu-59–Trp-79, Trp-87–Val-107, Val-122–Tyr-142, and Val-156–Val-176.

Belongs to the major facilitator superfamily. Allantoate permease family.

The protein localises to the membrane. This is an uncharacterized protein from Saccharomyces cerevisiae (strain ATCC 204508 / S288c) (Baker's yeast).